The chain runs to 417 residues: MLYLEDYLEMIEQLPMDLRDRFTEMREMDLQVQNAMDQLEQRVGEFFMNAKKNKPEWREEQMASIKKDYFKALEDADEKVQLANQIYDLVDRHLRKLDQELAKFKMELEADNAGITEILERRSLELDTPSQPVNNHHVHSHSLGEKRKHNPSSHHSTTDHVSEKKFKSEALLSTLTSDASKENTAGCRNNLSSSSTNNVYNVNASQPLTSYNISSLSTGAGAGAITMAAAQAVQATAQMKEGRRTSSLKASYEAFKNNDFQLGISLSRDSATYSSSALASTLTQTLTSSATTDSRSGRKSKSNNKSASQQSSSSSSSSSLSSCSSSSALAHELSHQQTAAIPESDTNSQVDWTYDPNEPRYCICNQVSYGEMVGCDNQDCPIEWFHYGCVGLSEAPKGKWYCPQCTAAMKRRGSRHK.

Disordered stretches follow at residues 126–165 (LDTPSQPVNNHHVHSHSLGEKRKHNPSSHHSTTDHVSEKK), 177–198 (SDASKENTAGCRNNLSSSSTNN), and 284–320 (QTLTSSATTDSRSGRKSKSNNKSASQQSSSSSSSSSL). The segment covering 136–152 (HHVHSHSLGEKRKHNPS) has biased composition (basic residues). Basic and acidic residues predominate over residues 156-165 (STTDHVSEKK). Polar residues predominate over residues 177-187 (SDASKENTAGC). Composition is skewed to low complexity over residues 189-198 (NNLSSSSTNN), 284-294 (QTLTSSATTDS), and 303-320 (NNKSASQQSSSSSSSSSL). The segment at 359–408 (PRYCICNQVSYGEMVGCDNQDCPIEWFHYGCVGLSEAPKGKWYCPQCTAA) adopts a PHD-type zinc-finger fold. 8 residues coordinate Zn(2+): Cys362, Cys364, Cys375, Cys380, His386, Cys389, Cys402, and Cys405.

The protein belongs to the ING family. Interacts with H3K4me3 and to a lesser extent with H3K4me2. Component of the NuA4 histone acetyltransferase complex.

It localises to the nucleus. In terms of biological role, component of the NuA4 histone acetyltransferase (HAT) complex which is involved in transcriptional activation of select genes principally by acetylation of nucleosomal histone H4 and H2A. This modification may both alter nucleosome - DNA interactions and promote interaction of the modified histones with other proteins which positively regulate transcription. NuA4 may also play a direct role in DNA repair when directly recruited to sites of DNA damage. The polypeptide is Inhibitor of growth protein 3 (ing3) (Xenopus tropicalis (Western clawed frog)).